A 158-amino-acid polypeptide reads, in one-letter code: Transcription elongation factor GreA (158 aa).

This sequence belongs to the GreA/GreB family.

In terms of biological role, necessary for efficient RNA polymerase transcription elongation past template-encoded arresting sites. The arresting sites in DNA have the property of trapping a certain fraction of elongating RNA polymerases that pass through, resulting in locked ternary complexes. Cleavage of the nascent transcript by cleavage factors such as GreA or GreB allows the resumption of elongation from the new 3'terminus. GreA releases sequences of 2 to 3 nucleotides. The protein is Transcription elongation factor GreA of Psychrobacter cryohalolentis (strain ATCC BAA-1226 / DSM 17306 / VKM B-2378 / K5).